We begin with the raw amino-acid sequence, 130 residues long: Large ribosomal subunit protein eL22 (130 aa).

Belongs to the eukaryotic ribosomal protein eL22 family.

This chain is Large ribosomal subunit protein eL22 (rpl-22), found in Caenorhabditis elegans.